Here is a 450-residue protein sequence, read N- to C-terminus: UDP-N-acetylmuramoylalanine--D-glutamate ligase (450 aa).

119–125 contributes to the ATP binding site; that stretch reads GSNGKTT.

This sequence belongs to the MurCDEF family.

It is found in the cytoplasm. It catalyses the reaction UDP-N-acetyl-alpha-D-muramoyl-L-alanine + D-glutamate + ATP = UDP-N-acetyl-alpha-D-muramoyl-L-alanyl-D-glutamate + ADP + phosphate + H(+). The protein operates within cell wall biogenesis; peptidoglycan biosynthesis. Functionally, cell wall formation. Catalyzes the addition of glutamate to the nucleotide precursor UDP-N-acetylmuramoyl-L-alanine (UMA). The polypeptide is UDP-N-acetylmuramoylalanine--D-glutamate ligase (Streptococcus sanguinis (strain SK36)).